The following is a 126-amino-acid chain: Large ribosomal subunit protein bL19 (126 aa).

Belongs to the bacterial ribosomal protein bL19 family.

Functionally, this protein is located at the 30S-50S ribosomal subunit interface and may play a role in the structure and function of the aminoacyl-tRNA binding site. The protein is Large ribosomal subunit protein bL19 of Albidiferax ferrireducens (strain ATCC BAA-621 / DSM 15236 / T118) (Rhodoferax ferrireducens).